Reading from the N-terminus, the 25-residue chain is Arginine attenuator peptide (25 aa).

This sequence belongs to the arginine attenuator peptide family.

In terms of biological role, arginine attenuator peptide (AAP) that has a regulatory role in the production of arginine-specific carbamoyl phosphate synthetase. Encoded by an upstream open reading frame (uORF) within the 5'-leader region of arginine-specific carbamoyl phosphate synthetase small chain (CPA1) mRNA, it attenuates the translation of the downstream CPA1 ORF. In the presence of high concentrations of arginine, ribosomes translating the uORF encoding AAP stall at the termination codon, resulting in reduced translation from the downstream CPA1 initiation codon. In Saccharomyces cerevisiae (strain ATCC 204508 / S288c) (Baker's yeast), this protein is Arginine attenuator peptide.